The sequence spans 475 residues: V-type ATP synthase beta chain (475 aa).

The protein belongs to the ATPase alpha/beta chains family.

Its function is as follows. Produces ATP from ADP in the presence of a proton gradient across the membrane. The V-type beta chain is a regulatory subunit. This chain is V-type ATP synthase beta chain, found in Anaeromyxobacter dehalogenans (strain 2CP-C).